Consider the following 384-residue polypeptide: Formate-dependent phosphoribosylglycinamide formyltransferase (384 aa).

N(1)-(5-phospho-beta-D-ribosyl)glycinamide-binding positions include 14-15 (EL) and glutamate 74. Residues arginine 106, lysine 147, 152 to 157 (SSGKGQ), 187 to 190 (EEFI), and glutamate 195 contribute to the ATP site. The region spanning 111 to 300 (RLAAETLHLP…EFALHVRAVL (190 aa)) is the ATP-grasp domain. Positions 259 and 271 each coordinate Mg(2+). Residues aspartate 278, lysine 348, and 355 to 356 (RR) each bind N(1)-(5-phospho-beta-D-ribosyl)glycinamide.

The protein belongs to the PurK/PurT family. In terms of assembly, homodimer.

It catalyses the reaction N(1)-(5-phospho-beta-D-ribosyl)glycinamide + formate + ATP = N(2)-formyl-N(1)-(5-phospho-beta-D-ribosyl)glycinamide + ADP + phosphate + H(+). Its pathway is purine metabolism; IMP biosynthesis via de novo pathway; N(2)-formyl-N(1)-(5-phospho-D-ribosyl)glycinamide from N(1)-(5-phospho-D-ribosyl)glycinamide (formate route): step 1/1. In terms of biological role, involved in the de novo purine biosynthesis. Catalyzes the transfer of formate to 5-phospho-ribosyl-glycinamide (GAR), producing 5-phospho-ribosyl-N-formylglycinamide (FGAR). Formate is provided by PurU via hydrolysis of 10-formyl-tetrahydrofolate. The polypeptide is Formate-dependent phosphoribosylglycinamide formyltransferase (Bacillus velezensis (strain DSM 23117 / BGSC 10A6 / LMG 26770 / FZB42) (Bacillus amyloliquefaciens subsp. plantarum)).